We begin with the raw amino-acid sequence, 153 residues long: Protein Smg homolog (153 aa).

It belongs to the Smg family.

The polypeptide is Protein Smg homolog (Neisseria meningitidis serogroup B (strain ATCC BAA-335 / MC58)).